The sequence spans 687 residues: Dictomallein (687 aa).

Disordered stretches follow at residues 1-45 (MGNG…SRRL) and 73-112 (TAGGAAPLTPAVASPAGPTGSTPGSTPGATTAPAPSSTSA). Positions 233-501 (PVFGTDADVQ…QAWIASRVLA (269 aa)) constitute a Peptidase M66 domain. Histidine 393 contributes to the Zn(2+) binding site. The active site involves glutamate 394. Residues histidine 397 and histidine 403 each contribute to the Zn(2+) site.

This sequence belongs to the dictomallein family. Zn(2+) is required as a cofactor.

The chain is Dictomallein (dtmL) from Burkholderia pseudomallei (strain 1710b).